Here is a 374-residue protein sequence, read N- to C-terminus: Methylthioribose-1-phosphate isomerase (374 aa).

Asp-251 (proton donor) is an active-site residue.

This sequence belongs to the eIF-2B alpha/beta/delta subunits family. MtnA subfamily.

It is found in the cytoplasm. Its subcellular location is the nucleus. The enzyme catalyses 5-(methylsulfanyl)-alpha-D-ribose 1-phosphate = 5-(methylsulfanyl)-D-ribulose 1-phosphate. It participates in amino-acid biosynthesis; L-methionine biosynthesis via salvage pathway; L-methionine from S-methyl-5-thio-alpha-D-ribose 1-phosphate: step 1/6. In terms of biological role, catalyzes the interconversion of methylthioribose-1-phosphate (MTR-1-P) into methylthioribulose-1-phosphate (MTRu-1-P). In Oryza sativa subsp. japonica (Rice), this protein is Methylthioribose-1-phosphate isomerase (IDI2).